We begin with the raw amino-acid sequence, 474 residues long: Trifunctional enzyme subunit beta, mitochondrial (474 aa).

The transit peptide at 1 to 33 directs the protein to the mitochondrion; it reads MTILTYPFKNLPTASKWALRFSIRPLSCSSQLR. At Lys72 the chain carries N6-acetyllysine; alternate. N6-succinyllysine; alternate is present on Lys72. The Acyl-thioester intermediate role is filled by Cys138. Residues 173–220 lie within the membrane without spanning it; that stretch reads IRHSRKMRKLMLDLNKAKSMGQRLSLISKFRFNFLAPELPAVSEFSTS. Position 188 is an N6-acetyllysine; alternate (Lys188). Lys188 carries the N6-succinyllysine; alternate modification. N6-succinyllysine occurs at positions 190, 272, and 291. Position 293 is an N6-acetyllysine; alternate (Lys293). N6-succinyllysine; alternate is present on Lys293. An N6-acetyllysine modification is found at Lys298. Lys332 is modified (N6-acetyllysine; alternate). Residue Lys332 is modified to N6-succinyllysine; alternate. 2 positions are modified to N6-acetyllysine: Lys348 and Lys361. The active-site Proton donor/acceptor is Cys458.

The protein belongs to the thiolase-like superfamily. Thiolase family. In terms of assembly, heterotetramer of 2 alpha/HADHA and 2 beta/HADHB subunits; forms the mitochondrial trifunctional enzyme. Also purified as higher order heterooligomers including a 4 alpha/HADHA and 4 beta/HADHB heterooligomer which physiological significance remains unclear. The mitochondrial trifunctional enzyme interacts with MTLN. Interacts with RSAD2/viperin.

It is found in the mitochondrion. The protein localises to the mitochondrion inner membrane. It localises to the mitochondrion outer membrane. Its subcellular location is the endoplasmic reticulum. The enzyme catalyses an acyl-CoA + acetyl-CoA = a 3-oxoacyl-CoA + CoA. It carries out the reaction butanoyl-CoA + acetyl-CoA = 3-oxohexanoyl-CoA + CoA. It catalyses the reaction hexanoyl-CoA + acetyl-CoA = 3-oxooctanoyl-CoA + CoA. The catalysed reaction is octanoyl-CoA + acetyl-CoA = 3-oxodecanoyl-CoA + CoA. The enzyme catalyses decanoyl-CoA + acetyl-CoA = 3-oxododecanoyl-CoA + CoA. It carries out the reaction dodecanoyl-CoA + acetyl-CoA = 3-oxotetradecanoyl-CoA + CoA. It catalyses the reaction tetradecanoyl-CoA + acetyl-CoA = 3-oxohexadecanoyl-CoA + CoA. It functions in the pathway lipid metabolism; fatty acid beta-oxidation. Functionally, mitochondrial trifunctional enzyme catalyzes the last three of the four reactions of the mitochondrial beta-oxidation pathway. The mitochondrial beta-oxidation pathway is the major energy-producing process in tissues and is performed through four consecutive reactions breaking down fatty acids into acetyl-CoA. Among the enzymes involved in this pathway, the trifunctional enzyme exhibits specificity for long-chain fatty acids. Mitochondrial trifunctional enzyme is a heterotetrameric complex composed of two proteins, the trifunctional enzyme subunit alpha/HADHA carries the 2,3-enoyl-CoA hydratase and the 3-hydroxyacyl-CoA dehydrogenase activities, while the trifunctional enzyme subunit beta/HADHB described here bears the 3-ketoacyl-CoA thiolase activity. In Homo sapiens (Human), this protein is Trifunctional enzyme subunit beta, mitochondrial (HADHB).